Reading from the N-terminus, the 505-residue chain is Calcium/calmodulin-dependent protein kinase kinase 1 (505 aa).

The interval 28-66 (LEEADEGPEPARNGVDPPPRARAASVIPGSASRPTPVRP) is disordered. Ser67 and Ser74 each carry phosphoserine. Asymmetric dimethylarginine is present on Arg78. Residues 84 to 105 (LGAQVGPYSTGPASHISPRSWR) form a disordered region. Phosphoserine is present on Ser100. A Phosphothreonine modification is found at Thr108. Positions 128 to 409 (YKLQSEIGKG…VSDIKLHPWV (282 aa)) constitute a Protein kinase domain. ATP contacts are provided by residues 134–142 (IGKGAYGVV) and Lys157. An RP domain region spans residues 167 to 189 (QYGFPRRPPPRGSQATQGGPAKQ). The Proton acceptor role is filled by Asp275. The autoinhibitory domain stretch occupies residues 435 to 440 (KNSVRL). Residues 438 to 463 (VRLIPSWTTVILVKSMLRKRSFGNPF) form a calmodulin-binding region. A phosphoserine mark is found at Ser458, Ser475, and Ser492. The tract at residues 460-505 (GNPFEPQARREERSMSAPGSLLMKEGCGEGCKSPELPGVQEDEAAS) is disordered.

The protein belongs to the protein kinase superfamily. Ser/Thr protein kinase family. In terms of assembly, interacts with CAMK4 and calmodulin. In terms of processing, appears to be autophosphorylated in a Ca(2+)/calmodulin-dependent manner. Phosphorylated at multiple sites by PRCAKA/PKA. Phosphorylation of Ser-458 is blocked upon binding to Ca(2+)/calmodulin. In vitro, phosphorylated by CAMK1 and CAMK4. In terms of tissue distribution, widely expressed. Differentially expressed in various brain regions.

The protein resides in the cytoplasm. The protein localises to the nucleus. It catalyses the reaction L-seryl-[protein] + ATP = O-phospho-L-seryl-[protein] + ADP + H(+). The catalysed reaction is L-threonyl-[protein] + ATP = O-phospho-L-threonyl-[protein] + ADP + H(+). With respect to regulation, activated by Ca(2+)/calmodulin. Binding of calmodulin may relieve intrasteric autoinhibition. Partially inhibited upon phosphorylation by PRCAKA/PKA. May be regulated through phosphorylation by CAMK1 and CAMK4. Its function is as follows. Calcium/calmodulin-dependent protein kinase that belongs to a proposed calcium-triggered signaling cascade involved in a number of cellular processes. Phosphorylates CAMK1, CAMK1D, CAMK1G and CAMK4. Involved in regulating cell apoptosis. Promotes cell survival by phosphorylating AKT1/PKB that inhibits pro-apoptotic BAD/Bcl2-antagonist of cell death. The polypeptide is Calcium/calmodulin-dependent protein kinase kinase 1 (Camkk1) (Mus musculus (Mouse)).